Consider the following 123-residue polypeptide: Angiogenin-2 (123 aa).

Gln-1 is subject to Pyrrolidone carboxylic acid. His-12 serves as the catalytic Proton acceptor. 3 cysteine pairs are disulfide-bonded: Cys-25-Cys-80, Cys-38-Cys-91, and Cys-56-Cys-106. The short motif at 30–34 is the Nucleolar localization signal element; the sequence is ERRNM. Residue Asn-33 is glycosylated (N-linked (GlcNAc...) asparagine). Residues Asp-40, His-82, and His-113 each coordinate Zn(2+). His-113 functions as the Proton donor in the catalytic mechanism.

The protein belongs to the pancreatic ribonuclease family. Serum and milk.

The protein resides in the cytoplasmic vesicle. It localises to the secretory vesicle lumen. Its subcellular location is the secreted. It is found in the nucleus. The protein localises to the nucleolus. Its activity is regulated as follows. Divalent metal ions, such as Cu2+ and Zn2+, may inhibit the ribonucleolytic activity. Its function is as follows. Binds tightly to placental ribonuclease inhibitor and has very low ribonuclease activity. Has potent angiogenic activity. Angiogenin induces vascularization of normal and malignant tissues. Abolishes protein synthesis by specifically hydrolyzing cellular tRNAs. In Bos taurus (Bovine), this protein is Angiogenin-2.